The sequence spans 442 residues: Alpha-1,6-mannosyl-glycoprotein 2-beta-N-acetylglucosaminyltransferase (442 aa).

Residues 1-9 are Cytoplasmic-facing; the sequence is MRFRIYKRK. Residues 10-29 traverse the membrane as a helical; Signal-anchor for type II membrane protein segment; the sequence is VLILTLVVAACGFVLWSSNG. Residues 30–442 lie on the Lumenal side of the membrane; sequence RQRKNDALAP…ELCKSYRRLQ (413 aa). Residues N64 and N81 are each glycosylated (N-linked (GlcNAc...) asparagine). Substrate-binding positions include 118-122 and D149; that span reads QVHNR. C191 and C205 are oxidised to a cystine. Residue 224 to 228 participates in substrate binding; that stretch reads QTKHH. D256 contacts Mn(2+). A disulfide bridge connects residues C278 and C281. R293 contributes to the substrate binding site. Disulfide bonds link C329–C352, C334–C435, and C373–C381. Residue H369 coordinates Mn(2+).

The protein belongs to the glycosyltransferase 16 (GT16) protein family. As to quaternary structure, homodimer. It depends on Mn(2+) as a cofactor. Detected in liver (at protein level). Detected in liver, brain, thymus and spleen.

Its subcellular location is the golgi apparatus membrane. It carries out the reaction an N(4)-{beta-D-GlcNAc-(1-&gt;2)-alpha-D-Man-(1-&gt;3)-[alpha-D-Man-(1-&gt;6)]-beta-D-Man-(1-&gt;4)-beta-D-GlcNAc-(1-&gt;4)-beta-D-GlcNAc}-L-asparaginyl-[protein] + UDP-N-acetyl-alpha-D-glucosamine = N(4)-{beta-D-GlcNAc-(1-&gt;2)-alpha-D-Man-(1-&gt;3)-[beta-D-GlcNAc-(1-&gt;2)-alpha-D-Man-(1-&gt;6)]-beta-D-Man-(1-&gt;4)-beta-D-GlcNAc-(1-&gt;4)-beta-D-GlcNAc}-L-asparaginyl-[protein] + UDP + H(+). Its pathway is protein modification; protein glycosylation. Functionally, plays an essential role in protein N-glycosylation. Catalyzes the transfer of N-acetylglucosamine (GlcNAc) onto the free terminal mannose moiety in the core structure of the nascent N-linked glycan chain, giving rise to the second branch in complex glycans. In Rattus norvegicus (Rat), this protein is Alpha-1,6-mannosyl-glycoprotein 2-beta-N-acetylglucosaminyltransferase (Mgat2).